The primary structure comprises 602 residues: MVVDDPCLLNIPTSFYHSTNQELDLSNKTFKREVGGPYSVMMDNKIGKPHLLETDQQNFFQDSKPTNEVHAVKGERENSGESEEEEDEDDDDDDDDDDDDEEGEDEDEVNYKREQIIVEVNLNNQTLNVSKGDKGVPKDPSQIKTSSDDEGGDSGEDDQDSHEDEENNPLPLDGQTNMQHGNQDQKTENSDMVGGDGTIPANSTKEQGKGGEAPKRKKKPKSPSDKAKSEEKETLTCDKCPRVFNTRWYLEKHMNVTHRRMQICDKCGKKFVLESELSLHLQTDCEKNIQCITCNKTFKKLWSLHEHIKIVHGYAEKKFSCEICEKKFYTMAHVRKHLVAHTKDMPFTCETCGKSFKRSMSLKVHSLQHSGEKPFRCENCDERFQYKYQLRSHMSIHIGHKQFMCQWCGKDFNMKQYFDEHMKTHTGEKPFICEICGKSFTSRPNMKRHRRTHTGEKPYPCDVCGMRFRFSNMLKAHKEKCFRVTSPVGVPPALQITLNNPTLSNPSQGISNLPNAHIPPPSPTPPLNLNALNPLPPRPIPHPFSHLHLHPHSHTHHLAVPPVPHLPPPPALFKSEALNHRGQNDDSFLRHLAEKTSAGQHH.

The segment at 60–232 (FQDSKPTNEV…PSDKAKSEEK (173 aa)) is disordered. Positions 65–79 (PTNEVHAVKGERENS) are enriched in basic and acidic residues. Acidic residues-rich tracts occupy residues 80 to 108 (GESEEEEDEDDDDDDDDDDDDEEGEDEDE) and 148 to 167 (DDEGGDSGEDDQDSHEDEEN). A compositionally biased stretch (basic and acidic residues) spans 222 to 232 (SPSDKAKSEEK). The C2H2-type 1 zinc finger occupies 235 to 258 (LTCDKCPRVFNTRWYLEKHMNVTH). The segment at 262-284 (QICDKCGKKFVLESELSLHLQTD) adopts a C2H2-type 2; degenerate zinc-finger fold. C2H2-type zinc fingers lie at residues 289-312 (IQCITCNKTFKKLWSLHEHIKIVH), 319-341 (FSCEICEKKFYTMAHVRKHLVAH), 347-369 (FTCETCGKSFKRSMSLKVHSLQH), 375-397 (FRCENCDERFQYKYQLRSHMSIH), 403-425 (FMCQWCGKDFNMKQYFDEHMKTH), and 431-453 (FICEICGKSFTSRPNMKRHRRTH). A C2H2-type 9; degenerate zinc finger spans residues 459–482 (YPCDVCGMRFRFSNMLKAHKEKCF). The disordered stretch occupies residues 543 to 575 (PFSHLHLHPHSHTHHLAVPPVPHLPPPPALFKS). A compositionally biased stretch (basic residues) spans 545-557 (SHLHLHPHSHTHH). Over residues 561-571 (PPVPHLPPPPA) the composition is skewed to pro residues.

This sequence belongs to the krueppel C2H2-type zinc-finger protein family.

The protein localises to the nucleus. Its function is as follows. May be involved in transcriptional regulation. The sequence is that of Zinc finger protein 652-B (znf652-b) from Xenopus laevis (African clawed frog).